A 695-amino-acid polypeptide reads, in one-letter code: Cysteine-rich receptor-like protein kinase 6 (695 aa).

An N-terminal signal peptide occupies residues 1–31; that stretch reads MRRHRPYLDGVAAAAATFLLAVLLHAPLAAG. Residues 32-294 are Extracellular-facing; it reads EDEPPPWVLC…ATSGEKTKNR (263 aa). 2 Gnk2-homologous domains span residues 38-142 and 151-261; these read WVLC…NRDF and TTYT…VFPF. N-linked (GlcNAc...) asparagine glycosylation is found at asparagine 49, asparagine 53, asparagine 70, and asparagine 101. 2 cysteine pairs are disulfide-bonded: cysteine 96–cysteine 105 and cysteine 108–cysteine 133. N-linked (GlcNAc...) asparagine glycosylation is present at asparagine 178. 2 disulfides stabilise this stretch: cysteine 215-cysteine 224 and cysteine 227-cysteine 252. A helical transmembrane segment spans residues 295-315; that stretch reads IGTVLAIVMPAIAAILLMVVA. Over 316–695 the chain is Cytoplasmic; the sequence is CFCCWKRIKK…DLSITELVPR (380 aa). The 272-residue stretch at 363 to 634 folds into the Protein kinase domain; the sequence is FADTKMIGQG…PTISSVNIML (272 aa). ATP-binding positions include 369–377 and lysine 391; that span reads IGQGGFGMV. Aspartate 488 serves as the catalytic Proton acceptor. The disordered stretch occupies residues 658-682; it reads DSSNPYSERYPRPRHSGYSDNSTVV.

Belongs to the protein kinase superfamily. Ser/Thr protein kinase family. CRK subfamily.

The protein localises to the membrane. Involved in disease resistance. Required for NPR1/NH1-mediated immunity to the bacterial blight pathogen Xanthomomas oryzae pv. oryzae (Xoo). Required for the benzothiadiazole (BTH)-induced immune response. Possesses kinase activity in vitro. The polypeptide is Cysteine-rich receptor-like protein kinase 6 (Oryza sativa subsp. japonica (Rice)).